The chain runs to 231 residues: Protein FMP52, mitochondrial (231 aa).

Residues 1 to 44 constitute a mitochondrion transit peptide; the sequence is MNGLVLGATGLCGGGFLRHAQEAPQFSKVYAILRRELPFPATDK.

This sequence belongs to the FMP52 family.

Its subcellular location is the mitochondrion outer membrane. The chain is Protein FMP52, mitochondrial (FMP52) from Saccharomyces cerevisiae (strain ATCC 204508 / S288c) (Baker's yeast).